A 324-amino-acid polypeptide reads, in one-letter code: Phospho-N-acetylmuramoyl-pentapeptide-transferase (324 aa).

Transmembrane regions (helical) follow at residues Val5–Ile25, Gly50–Met70, Leu77–Leu97, Leu117–Ser137, Leu147–Ser167, Leu176–Trp196, Ile203–His223, Val227–Leu247, Leu250–Ile270, and Val304–Ile324.

This sequence belongs to the glycosyltransferase 4 family. MraY subfamily. It depends on Mg(2+) as a cofactor.

It is found in the cell membrane. It catalyses the reaction UDP-N-acetyl-alpha-D-muramoyl-L-alanyl-gamma-D-glutamyl-meso-2,6-diaminopimeloyl-D-alanyl-D-alanine + di-trans,octa-cis-undecaprenyl phosphate = di-trans,octa-cis-undecaprenyl diphospho-N-acetyl-alpha-D-muramoyl-L-alanyl-D-glutamyl-meso-2,6-diaminopimeloyl-D-alanyl-D-alanine + UMP. It functions in the pathway cell wall biogenesis; peptidoglycan biosynthesis. In terms of biological role, catalyzes the initial step of the lipid cycle reactions in the biosynthesis of the cell wall peptidoglycan: transfers peptidoglycan precursor phospho-MurNAc-pentapeptide from UDP-MurNAc-pentapeptide onto the lipid carrier undecaprenyl phosphate, yielding undecaprenyl-pyrophosphoryl-MurNAc-pentapeptide, known as lipid I. The polypeptide is Phospho-N-acetylmuramoyl-pentapeptide-transferase (Geobacillus sp. (strain WCH70)).